The following is a 196-amino-acid chain: MELAKMSDMTKLHQAVAAGDYSLVKKILKKGLCDPNYKDVDWNDRTPLHWAAIKGQMEVIRLLIEYGARPCLVTSVGWTPAHFAAEAGHLNILKTLHALHAAIDAPDFFGDTPKRIAQIYGQKACVAFLEKAEPECQDHRCAAQQKGLPLDERDEDWDAKKRELELSLPSLNQNMNKKNKKSRGPTRPSNTKGRRV.

ANK repeat units lie at residues Ser-7–Tyr-37, Asn-43–Leu-72, and Val-76–Ala-105. The interval Glu-152 to Val-196 is disordered. Residues Arg-187–Val-196 are compositionally biased toward polar residues.

In Homo sapiens (Human), this protein is Ankyrin repeat domain-containing protein 66 (ANKRD66).